Here is a 513-residue protein sequence, read N- to C-terminus: UDP-N-acetylmuramyl-tripeptide synthetase (513 aa).

Residue serine 38 participates in UDP-N-acetyl-alpha-D-muramoyl-L-alanyl-D-glutamate binding. 115-121 serves as a coordination point for ATP; it reads GTKGKTT. UDP-N-acetyl-alpha-D-muramoyl-L-alanyl-D-glutamate contacts are provided by residues 161-162, serine 188, and arginine 196; that span reads TT. Residue lysine 230 is modified to N6-carboxylysine.

It belongs to the MurCDEF family. MurE subfamily. In terms of processing, carboxylation is probably crucial for Mg(2+) binding and, consequently, for the gamma-phosphate positioning of ATP.

It is found in the cytoplasm. The protein operates within cell wall biogenesis; peptidoglycan biosynthesis. Catalyzes the addition of an amino acid to the nucleotide precursor UDP-N-acetylmuramoyl-L-alanyl-D-glutamate (UMAG) in the biosynthesis of bacterial cell-wall peptidoglycan. This is UDP-N-acetylmuramyl-tripeptide synthetase from Latilactobacillus sakei subsp. sakei (strain 23K) (Lactobacillus sakei subsp. sakei).